We begin with the raw amino-acid sequence, 245 residues long: 3-deoxy-manno-octulosonate cytidylyltransferase (245 aa).

The protein belongs to the KdsB family.

The protein resides in the cytoplasm. The enzyme catalyses 3-deoxy-alpha-D-manno-oct-2-ulosonate + CTP = CMP-3-deoxy-beta-D-manno-octulosonate + diphosphate. The protein operates within nucleotide-sugar biosynthesis; CMP-3-deoxy-D-manno-octulosonate biosynthesis; CMP-3-deoxy-D-manno-octulosonate from 3-deoxy-D-manno-octulosonate and CTP: step 1/1. Its pathway is bacterial outer membrane biogenesis; lipopolysaccharide biosynthesis. In terms of biological role, activates KDO (a required 8-carbon sugar) for incorporation into bacterial lipopolysaccharide in Gram-negative bacteria. The protein is 3-deoxy-manno-octulosonate cytidylyltransferase of Fusobacterium nucleatum subsp. nucleatum (strain ATCC 25586 / DSM 15643 / BCRC 10681 / CIP 101130 / JCM 8532 / KCTC 2640 / LMG 13131 / VPI 4355).